The primary structure comprises 458 residues: MKLWGGRFVHESNSFFKKFNSSIQTDYKLVEQDIFSSMSWADALLKSGVLIKSECNEIKNALQKLLCIVKKTPNIVLDSNLEDVHSWVETQLILLVGDLGKKLHTGRSRNDQIATDLKLWCKHKIKDLFNRIIEFKIELIKISDNTQSVIMPGYTHLQRAQPITFSFWCLAYLEMIKRDEDRLKDALKRLNSSPLGCGAISGTTWNIDRENLAKSMGFKSATNNSLDSVSDRDYVVELASVASISMMHLSRFAEDLIFFNSSESKFVELSDTITSGSSLMPQKKNPDSLELIRAKSGRVFGFLVSILVVLKGLPLSYNKDMQEDKKGLFDALNTWSKCLFMSSLVLKNLHINSINCLKASKKSYSNATELADYLVNKGITFRDAHHITGQIVLEALKLNVPLEKLDLSIFKKYSSSIELDVYNFLDVISLLEKRNSKGGVAPKIVSKAIICEKKQLKI.

Belongs to the lyase 1 family. Argininosuccinate lyase subfamily.

The protein resides in the cytoplasm. It catalyses the reaction 2-(N(omega)-L-arginino)succinate = fumarate + L-arginine. It participates in amino-acid biosynthesis; L-arginine biosynthesis; L-arginine from L-ornithine and carbamoyl phosphate: step 3/3. This is Argininosuccinate lyase from Buchnera aphidicola subsp. Baizongia pistaciae (strain Bp).